Reading from the N-terminus, the 95-residue chain is Large ribosomal subunit protein bL25 (95 aa).

Belongs to the bacterial ribosomal protein bL25 family. As to quaternary structure, part of the 50S ribosomal subunit; part of the 5S rRNA/L5/L18/L25 subcomplex. Contacts the 5S rRNA. Binds to the 5S rRNA independently of L5 and L18.

In terms of biological role, this is one of the proteins that binds to the 5S RNA in the ribosome where it forms part of the central protuberance. The chain is Large ribosomal subunit protein bL25 from Haemophilus influenzae (strain ATCC 51907 / DSM 11121 / KW20 / Rd).